Consider the following 242-residue polypeptide: ATP-dependent dethiobiotin synthetase BioD (242 aa).

12 to 17 (EVGKTV) is a binding site for ATP. Residue threonine 16 participates in Mg(2+) binding. Lysine 37 is a catalytic residue. Serine 41 is a substrate binding site. ATP is bound by residues aspartate 51 and 112 to 115 (EGAG). Positions 51 and 112 each coordinate Mg(2+).

Belongs to the dethiobiotin synthetase family. Homodimer. The cofactor is Mg(2+).

It localises to the cytoplasm. The enzyme catalyses (7R,8S)-7,8-diammoniononanoate + CO2 + ATP = (4R,5S)-dethiobiotin + ADP + phosphate + 3 H(+). It participates in cofactor biosynthesis; biotin biosynthesis; biotin from 7,8-diaminononanoate: step 1/2. Catalyzes a mechanistically unusual reaction, the ATP-dependent insertion of CO2 between the N7 and N8 nitrogen atoms of 7,8-diaminopelargonic acid (DAPA, also called 7,8-diammoniononanoate) to form a ureido ring. The chain is ATP-dependent dethiobiotin synthetase BioD from Bacillus thuringiensis (strain Al Hakam).